The following is a 267-amino-acid chain: Eukaryotic translation initiation factor 3 subunit J (267 aa).

Disordered regions lie at residues 1–128 and 220–241; these read MAPS…DIDL and KMREERAADKGNKKTKAAKTKV. The span at 28 to 46 shows a compositional bias: acidic residues; that stretch reads DEEEEDVLDSWDAAEDSEV. Positions 44 to 96 form a coiled coil; the sequence is SEVEREKAAKAAAAAAKAEAEAAAKKKSKAQRIEEHKQERKKQAEANESDEDS. The span at 74-88 shows a compositional bias: basic and acidic residues; it reads QRIEEHKQERKKQAE. A compositionally biased stretch (acidic residues) spans 90-100; sequence NESDEDSDEDE. Basic and acidic residues-rich tracts occupy residues 108 to 121 and 220 to 231; these read RRTEKEGDLKHAQD and KMREERAADKGN.

Belongs to the eIF-3 subunit J family. In terms of assembly, component of the eukaryotic translation initiation factor 3 (eIF-3) complex.

It is found in the cytoplasm. In terms of biological role, component of the eukaryotic translation initiation factor 3 (eIF-3) complex, which is involved in protein synthesis of a specialized repertoire of mRNAs and, together with other initiation factors, stimulates binding of mRNA and methionyl-tRNAi to the 40S ribosome. The eIF-3 complex specifically targets and initiates translation of a subset of mRNAs involved in cell proliferation. The sequence is that of Eukaryotic translation initiation factor 3 subunit J (hcr1) from Neosartorya fischeri (strain ATCC 1020 / DSM 3700 / CBS 544.65 / FGSC A1164 / JCM 1740 / NRRL 181 / WB 181) (Aspergillus fischerianus).